Reading from the N-terminus, the 402-residue chain is Argininosuccinate synthase (402 aa).

9–17 (AYSGGLDTS) contacts ATP. Tyr87 contributes to the L-citrulline binding site. Gly117 serves as a coordination point for ATP. 3 residues coordinate L-aspartate: Thr119, Asn123, and Asp124. Asn123 contacts L-citrulline. The L-citrulline site is built by Arg127, Ser176, Ser185, Glu261, and Tyr273.

Belongs to the argininosuccinate synthase family. Type 1 subfamily. In terms of assembly, homotetramer.

It localises to the cytoplasm. It catalyses the reaction L-citrulline + L-aspartate + ATP = 2-(N(omega)-L-arginino)succinate + AMP + diphosphate + H(+). It functions in the pathway amino-acid biosynthesis; L-arginine biosynthesis; L-arginine from L-ornithine and carbamoyl phosphate: step 2/3. The sequence is that of Argininosuccinate synthase from Chlorobium phaeobacteroides (strain BS1).